We begin with the raw amino-acid sequence, 189 residues long: GTPase HRas (189 aa).

10–17 (GAKGVGKS) serves as a coordination point for GTP. Positions 32-40 (YDPTIEDSY) match the Effector region motif. GTP-binding positions include 57 to 61 (DTAGQ) and 116 to 119 (NKCD). S-palmitoyl cysteine; by host attachment occurs at residues Cys-181 and Cys-184. A Cysteine methyl ester; by host modification is found at Cys-186. Cys-186 carries S-farnesyl cysteine; by host lipidation. A propeptide spans 187-189 (VLS) (removed in mature form).

Belongs to the small GTPase superfamily. Ras family.

Its subcellular location is the host cell membrane. It catalyses the reaction GTP + H2O = GDP + phosphate + H(+). Alternates between an inactive form bound to GDP and an active form bound to GTP. Activated by a guanine nucleotide-exchange factor (GEF) and inactivated by a GTPase-activating protein (GAP). The sequence is that of GTPase HRas (H-RAS) from Moloney murine sarcoma virus (MoMSV).